A 468-amino-acid polypeptide reads, in one-letter code: Ubiquitin carboxyl-terminal hydrolase 17-like protein B (468 aa).

A disordered region spans residues 1-20 (MVVALSFPEADPAMSPPSAP). The USP domain occupies 51–348 (CGLQNTGNSC…NAYVLFYVQQ (298 aa)). C60 functions as the Nucleophile in the catalytic mechanism. Catalysis depends on H307, which acts as the Proton acceptor. A disordered region spans residues 374-449 (KKSGEKKHNK…GGQNLRNTEG (76 aa)). Positions 394–403 (CENREKRSSK) are enriched in basic and acidic residues. Positions 422 to 434 (GQKQENTKLTPQE) are enriched in polar residues.

This sequence belongs to the peptidase C19 family. USP17 subfamily. Post-translationally, ubiquitinated. Detected in brain, heart, liver, lung, kidney, ovary and spleen.

The enzyme catalyses Thiol-dependent hydrolysis of ester, thioester, amide, peptide and isopeptide bonds formed by the C-terminal Gly of ubiquitin (a 76-residue protein attached to proteins as an intracellular targeting signal).. With respect to regulation, inhibited by ubiquitin aldehyde. Deubiquitinating enzyme that removes conjugated ubiquitin from specific proteins to regulate different cellular processes. The polypeptide is Ubiquitin carboxyl-terminal hydrolase 17-like protein B (Mus musculus (Mouse)).